A 73-amino-acid chain; its full sequence is Homeodomain-only protein (73 aa).

A DNA-binding region (homeobox; degenerate) is located at residues 3 to 62 (AQTASGPTEDQVEILEYNFNKVNKHPDPTTLCLIAAEAGLTEEQTQKWFKQRLAEWRRSE).

As to quaternary structure, interacts with serum response factor (SRF). Component of a large complex containing histone deacetylases such as HDAC2. Interacts with the acetylated forms of HSPA1A and HSPA1B. Interacts with HSPA8. In terms of tissue distribution, expressed in the embryonic and adult heart and in the adult brain, liver, lung, skeletal muscle, intestine and spleen. Throughout embryonic and postnatal development, it is expressed in the myocardium.

It is found in the nucleus. It localises to the cytoplasm. Atypical homeodomain protein which does not bind DNA and is required to modulate cardiac growth and development. Acts via its interaction with SRF, thereby modulating the expression of SRF-dependent cardiac-specific genes and cardiac development. Prevents SRF-dependent transcription either by inhibiting SRF binding to DNA or by recruiting histone deacetylase (HDAC) proteins that prevent transcription by SRF. Overexpression causes cardiac hypertrophy. Acts as a co-chaperone for HSPA1A and HSPA1B chaperone proteins and assists in chaperone-mediated protein refolding. This Mus musculus (Mouse) protein is Homeodomain-only protein (Hopx).